The chain runs to 266 residues: Large ribosomal subunit protein uL2m (266 aa).

This sequence belongs to the universal ribosomal protein uL2 family.

The protein resides in the mitochondrion. The polypeptide is Large ribosomal subunit protein uL2m (mrpl2) (Dictyostelium citrinum (Slime mold)).